Reading from the N-terminus, the 483-residue chain is MIARRIWRSHRFLRPFSSSSVCSPPFRVPEYLSQSSSSPASRPFFVHPPTLMKWGGGSRSWFSNEAMATDSNSGLIDVPLAQTGEGIAECELLKWFVKEGDSVEEFQPLCEVQSDKATIEITSRFKGKVALISHSPGDIIKVGETLVRLAVEDSQDSLLTTDSSEIVTLGGSKQGTENLLGALSTPAVRNLAKDLGIDINVITGTGKDGRVLKEDVLRFSDQKGFVTDSVSSEHAVIGGDSVSTKASSNFEDKTVPLRGFSRAMVKTMTMATSVPHFHFVEEINCDSLVELKQFFKENNTDSTIKHTFLPTLIKSLSMALTKYPFVNSCFNAESLEIILKGSHNIGVAMATEHGLVVPNIKNVQSLSLLEITKELSRLQHLAANNKLNPEDVTGGTITLSNIGAIGGKFGSPLLNLPEVAIIALGRIEKVPKFSKEGTVYPASIMMVNIAADHRVLDGATVARFCCQWKEYVEKPELLMLQMR.

Residues 1 to 75 (MIARRIWRSH…AMATDSNSGL (75 aa)) constitute a mitochondrion transit peptide. The Lipoyl-binding domain occupies 76–150 (IDVPLAQTGE…KVGETLVRLA (75 aa)). The residue at position 116 (K116) is an N6-lipoyllysine. One can recognise a Peripheral subunit-binding (PSBD) domain in the interval 183 to 220 (LSTPAVRNLAKDLGIDINVITGTGKDGRVLKEDVLRFS). Catalysis depends on residues H453 and D457.

It belongs to the 2-oxoacid dehydrogenase family. In terms of assembly, forms a 24-polypeptide structural core with octahedral symmetry. It depends on (R)-lipoate as a cofactor. Expressed in the non-photosynthetic organs such as siliques, flowers and roots.

The protein resides in the mitochondrion matrix. It catalyses the reaction N(6)-[(R)-dihydrolipoyl]-L-lysyl-[protein] + 2-methylpropanoyl-CoA = N(6)-[(R)-S(8)-2-methylpropanoyldihydrolipoyl]-L-lysyl-[protein] + CoA. The branched-chain alpha-keto dehydrogenase complex catalyzes the overall conversion of alpha-keto acids to acyl-CoA and CO(2). It contains multiple copies of three enzymatic components: branched-chain alpha-keto acid decarboxylase (E1), lipoamide acyltransferase (E2) and lipoamide dehydrogenase (E3). Within this complex, the catalytic function of this enzyme is to accept, and to transfer to coenzyme A, acyl groups that are generated by the branched-chain alpha-keto acid decarboxylase component. Required during sugar starvation and acts under the control of a sugar-sensing mechanism involving Ser/Thr kinases and phosphatases. This is Lipoamide acyltransferase component of branched-chain alpha-keto acid dehydrogenase complex, mitochondrial (BCE2) from Arabidopsis thaliana (Mouse-ear cress).